Reading from the N-terminus, the 261-residue chain is 1-(5-phosphoribosyl)-5-[(5-phosphoribosylamino)methylideneamino] imidazole-4-carboxamide isomerase (261 aa).

Aspartate 7 acts as the Proton acceptor in catalysis. The Proton donor role is filled by aspartate 129.

It belongs to the HisA/HisF family.

The protein resides in the cytoplasm. The enzyme catalyses 1-(5-phospho-beta-D-ribosyl)-5-[(5-phospho-beta-D-ribosylamino)methylideneamino]imidazole-4-carboxamide = 5-[(5-phospho-1-deoxy-D-ribulos-1-ylimino)methylamino]-1-(5-phospho-beta-D-ribosyl)imidazole-4-carboxamide. Its pathway is amino-acid biosynthesis; L-histidine biosynthesis; L-histidine from 5-phospho-alpha-D-ribose 1-diphosphate: step 4/9. This Colwellia psychrerythraea (strain 34H / ATCC BAA-681) (Vibrio psychroerythus) protein is 1-(5-phosphoribosyl)-5-[(5-phosphoribosylamino)methylideneamino] imidazole-4-carboxamide isomerase.